A 507-amino-acid chain; its full sequence is ATP synthase subunit alpha, chloroplastic (507 aa).

170-177 serves as a coordination point for ATP; the sequence is GDRQTGKT.

This sequence belongs to the ATPase alpha/beta chains family. As to quaternary structure, F-type ATPases have 2 components, CF(1) - the catalytic core - and CF(0) - the membrane proton channel. CF(1) has five subunits: alpha(3), beta(3), gamma(1), delta(1), epsilon(1). CF(0) has four main subunits: a, b, b' and c.

The protein resides in the plastid. Its subcellular location is the chloroplast thylakoid membrane. It catalyses the reaction ATP + H2O + 4 H(+)(in) = ADP + phosphate + 5 H(+)(out). Functionally, produces ATP from ADP in the presence of a proton gradient across the membrane. The alpha chain is a regulatory subunit. This Daucus carota (Wild carrot) protein is ATP synthase subunit alpha, chloroplastic.